The chain runs to 612 residues: Dihydroxy-acid dehydratase (612 aa).

Mg(2+) is bound at residue Asp-81. Position 122 (Cys-122) interacts with [2Fe-2S] cluster. The Mg(2+) site is built by Asp-123 and Lys-124. Position 124 is an N6-carboxylysine (Lys-124). Cys-195 is a binding site for [2Fe-2S] cluster. Glu-491 is a Mg(2+) binding site. Ser-517 serves as the catalytic Proton acceptor.

Belongs to the IlvD/Edd family. In terms of assembly, homodimer. [2Fe-2S] cluster is required as a cofactor. Requires Mg(2+) as cofactor.

The catalysed reaction is (2R)-2,3-dihydroxy-3-methylbutanoate = 3-methyl-2-oxobutanoate + H2O. The enzyme catalyses (2R,3R)-2,3-dihydroxy-3-methylpentanoate = (S)-3-methyl-2-oxopentanoate + H2O. It functions in the pathway amino-acid biosynthesis; L-isoleucine biosynthesis; L-isoleucine from 2-oxobutanoate: step 3/4. Its pathway is amino-acid biosynthesis; L-valine biosynthesis; L-valine from pyruvate: step 3/4. Functions in the biosynthesis of branched-chain amino acids. Catalyzes the dehydration of (2R,3R)-2,3-dihydroxy-3-methylpentanoate (2,3-dihydroxy-3-methylvalerate) into 2-oxo-3-methylpentanoate (2-oxo-3-methylvalerate) and of (2R)-2,3-dihydroxy-3-methylbutanoate (2,3-dihydroxyisovalerate) into 2-oxo-3-methylbutanoate (2-oxoisovalerate), the penultimate precursor to L-isoleucine and L-valine, respectively. This Buchnera aphidicola subsp. Baizongia pistaciae (strain Bp) protein is Dihydroxy-acid dehydratase.